We begin with the raw amino-acid sequence, 336 residues long: MKFIDEATIIVAAGDGGNGCISFRREKYIPFGPAEGGDGGNGGNVWLQADENLNTLIDYHFQHNFHAENGKHGQGKNFTGKCGKDLTIKVPIGTRVVDQNTNEILGDLIVHQQYLLVAKGGLRGLGNNHFKSSANCTPRKKTNGTKGEIRRLQLELILLADVGLLGLPNVGKSTLIRAVSAAKPKVANYPFTTLVPNLGVVQVHKKQSFIIADIPGLIKGAADGAGLGIRFLKHLERCRILLHLIDLAPADQSSPVENASIIINELKRYSEKLATKPSWLVFNKLDLIDKREALNIAQTISDALNQKHNYYLISAMNHQGIKTLCRDIMLFINKNK.

The Obg domain maps to 1–159; sequence MKFIDEATII…RRLQLELILL (159 aa). One can recognise an OBG-type G domain in the interval 160–333; the sequence is ADVGLLGLPN…LCRDIMLFIN (174 aa). GTP is bound by residues 166-173, 191-195, 213-216, 283-286, and 314-316; these read GLPNVGKS, FTTLV, DIPG, NKLD, and SAM. Residues S173 and T193 each contribute to the Mg(2+) site.

The protein belongs to the TRAFAC class OBG-HflX-like GTPase superfamily. OBG GTPase family. In terms of assembly, monomer. Mg(2+) is required as a cofactor.

Its subcellular location is the cytoplasm. Functionally, an essential GTPase which binds GTP, GDP and possibly (p)ppGpp with moderate affinity, with high nucleotide exchange rates and a fairly low GTP hydrolysis rate. Plays a role in control of the cell cycle, stress response, ribosome biogenesis and in those bacteria that undergo differentiation, in morphogenesis control. This chain is GTPase Obg, found in Baumannia cicadellinicola subsp. Homalodisca coagulata.